The chain runs to 138 residues: Putative pre-16S rRNA nuclease (138 aa).

The protein belongs to the YqgF nuclease family.

It localises to the cytoplasm. Functionally, could be a nuclease involved in processing of the 5'-end of pre-16S rRNA. The protein is Putative pre-16S rRNA nuclease of Geobacillus sp. (strain WCH70).